We begin with the raw amino-acid sequence, 333 residues long: Adenosine deaminase (333 aa).

Zn(2+)-binding residues include His12 and His14. Substrate contacts are provided by His14, Asp16, and Gly170. His197 contributes to the Zn(2+) binding site. Glu200 acts as the Proton donor in catalysis. Asp278 lines the Zn(2+) pocket. Asp279 contributes to the substrate binding site.

Belongs to the metallo-dependent hydrolases superfamily. Adenosine and AMP deaminases family. Adenosine deaminase subfamily. Zn(2+) is required as a cofactor.

The catalysed reaction is adenosine + H2O + H(+) = inosine + NH4(+). It catalyses the reaction 2'-deoxyadenosine + H2O + H(+) = 2'-deoxyinosine + NH4(+). In terms of biological role, catalyzes the hydrolytic deamination of adenosine and 2-deoxyadenosine. This chain is Adenosine deaminase, found in Salmonella paratyphi C (strain RKS4594).